The primary structure comprises 345 residues: Growth hormone-inducible transmembrane protein (345 aa).

The transit peptide at 1–45 (MLAARLVCLRTLPSRVFHPAFTKASPVVKNSITKNQWLLTPSREY) directs the protein to the mitochondrion. Topologically, residues 46 to 82 (ATKTRIGIRRGRTGQELKEAALEPSMEKIFKIDQMGR) are mitochondrial matrix. The chain crosses the membrane as a helical span at residues 83 to 103 (WFVAGGAAVGLGALCYYGLGL). The Mitochondrial intermembrane portion of the chain corresponds to 104 to 125 (SNEIGAIEKAVIWPQYVKDRIH). A helical transmembrane segment spans residues 126-146 (STYMYLAGSIGLTALSAIAIS). Over 147-159 (RTPVLMNFMMRGS) the chain is Mitochondrial matrix. Residues 160 to 180 (WVTIGVTFAAMVGAGMLVRSI) traverse the membrane as a helical segment. Over 181 to 190 (PYDQSPGPKH) the chain is Mitochondrial intermembrane. A helical membrane pass occupies residues 191-211 (LAWLLHSGVMGAVVAPLTILG). Residues 212 to 213 (GP) lie on the Mitochondrial matrix side of the membrane. Residues 214 to 234 (LLIRAAWYTAGIVGGLSTVAM) traverse the membrane as a helical segment. Over 235–244 (CAPSEKFLNM) the chain is Mitochondrial intermembrane. The chain crosses the membrane as a helical span at residues 245 to 265 (GAPLGVGLGLVFVSSLGSMFL). Over 266-271 (PPTTVA) the chain is Mitochondrial matrix. Residues 272–292 (GATLYSVAMYGGLVLFSMFLL) traverse the membrane as a helical segment. Topologically, residues 293–345 (YDTQKVIKRAEVSPMYGVQKYDPINSMLSIYMDTLNIFMRVATMLATGGNRKK) are mitochondrial intermembrane.

This sequence belongs to the BI1 family. In terms of assembly, interacts with LETM1. Interacts with AFG3L2. Undergoes AFG3L2-mediated proteolytic degradation, upon hyperpolarization of mitochondria.

The protein resides in the mitochondrion inner membrane. The catalysed reaction is Ca(2+)(in) + 2 H(+)(out) = Ca(2+)(out) + 2 H(+)(in). It catalyses the reaction K(+)(in) + H(+)(out) = K(+)(out) + H(+)(in). Its function is as follows. Plays an important role in maintenance of mitochondrial morphology and in mediating either calcium or potassium/proton antiport. Mediates proton-dependent calcium efflux from mitochondrion. Also functions as an electroneutral mitochondrial proton/potassium exchanger. Required for the mitochondrial tubular network and cristae organization. Involved in apoptotic release of cytochrome c. Inhibits the proteolytic activity of AFG3L2, stimulating respiration and stabilizing respiratory enzymes in actively respiring mitochondria. However, when mitochondria become hyperpolarized, GHITM loses its inhibitory activity toward AFG3L2 and the now the active AFG3L2 turns first on GHITM and, if hyperpolarization persists, on other proteins of the mitochondria, leading to a broad remodeling of the mitochondrial proteome. This Homo sapiens (Human) protein is Growth hormone-inducible transmembrane protein (GHITM).